A 165-amino-acid chain; its full sequence is Ribosome maturation factor RimM (165 aa).

Residues 94–165 (EDEFYIADLN…YVVLNYQREI (72 aa)) form the PRC barrel domain.

The protein belongs to the RimM family. In terms of assembly, binds ribosomal protein uS19.

The protein localises to the cytoplasm. Functionally, an accessory protein needed during the final step in the assembly of 30S ribosomal subunit, possibly for assembly of the head region. Essential for efficient processing of 16S rRNA. May be needed both before and after RbfA during the maturation of 16S rRNA. It has affinity for free ribosomal 30S subunits but not for 70S ribosomes. This is Ribosome maturation factor RimM from Rickettsia felis (strain ATCC VR-1525 / URRWXCal2) (Rickettsia azadi).